Here is a 176-residue protein sequence, read N- to C-terminus: RNA polymerase sigma factor SigO (176 aa).

Residues 30–43 (DARSLDELFKQFYK) carry the Polymerase core binding motif. Positions 139 to 158 (MQEIADSLGESRQNISNIHK) form a DNA-binding region, H-T-H motif.

It belongs to the sigma-70 factor family. As to quaternary structure, interacts with RNA polymerase.

In terms of biological role, sigma factors are initiation factors that promote the attachment of RNA polymerase to specific initiation sites and are then released. Together with its coactivator RsoA, positively regulates the expression of at least three operons, including oxdC-yvrL, sigO-rsoA and yvrJ. Required for the acid stress-dependent induction of the oxalate decarboxylase oxdC. This chain is RNA polymerase sigma factor SigO (sigO), found in Bacillus subtilis (strain 168).